A 289-amino-acid polypeptide reads, in one-letter code: Phosphatidylserine decarboxylase proenzyme (289 aa).

Active-site charge relay system; for autoendoproteolytic cleavage activity residues include aspartate 92, histidine 149, and serine 254. Residue serine 254 is the Schiff-base intermediate with substrate; via pyruvic acid; for decarboxylase activity of the active site. At serine 254 the chain carries Pyruvic acid (Ser); by autocatalysis.

This sequence belongs to the phosphatidylserine decarboxylase family. PSD-B subfamily. Prokaryotic type I sub-subfamily. As to quaternary structure, heterodimer of a large membrane-associated beta subunit and a small pyruvoyl-containing alpha subunit. It depends on pyruvate as a cofactor. In terms of processing, is synthesized initially as an inactive proenzyme. Formation of the active enzyme involves a self-maturation process in which the active site pyruvoyl group is generated from an internal serine residue via an autocatalytic post-translational modification. Two non-identical subunits are generated from the proenzyme in this reaction, and the pyruvate is formed at the N-terminus of the alpha chain, which is derived from the carboxyl end of the proenzyme. The autoendoproteolytic cleavage occurs by a canonical serine protease mechanism, in which the side chain hydroxyl group of the serine supplies its oxygen atom to form the C-terminus of the beta chain, while the remainder of the serine residue undergoes an oxidative deamination to produce ammonia and the pyruvoyl prosthetic group on the alpha chain. During this reaction, the Ser that is part of the protease active site of the proenzyme becomes the pyruvoyl prosthetic group, which constitutes an essential element of the active site of the mature decarboxylase.

The protein resides in the cell membrane. The enzyme catalyses a 1,2-diacyl-sn-glycero-3-phospho-L-serine + H(+) = a 1,2-diacyl-sn-glycero-3-phosphoethanolamine + CO2. It functions in the pathway phospholipid metabolism; phosphatidylethanolamine biosynthesis; phosphatidylethanolamine from CDP-diacylglycerol: step 2/2. Catalyzes the formation of phosphatidylethanolamine (PtdEtn) from phosphatidylserine (PtdSer). The sequence is that of Phosphatidylserine decarboxylase proenzyme from Pseudomonas aeruginosa (strain LESB58).